The primary structure comprises 444 residues: D(2) dopamine receptor (444 aa).

Topologically, residues 1-37 (MDPLNLSWYDDDPESRNWSRPFNGSEGKADRPPYNYY) are extracellular. Residues asparagine 5, asparagine 17, and asparagine 23 are each glycosylated (N-linked (GlcNAc...) asparagine). The helical transmembrane segment at 38 to 60 (AMLLTLLIFVIVFGNVLVCMAVS) threads the bilayer. Topologically, residues 61–70 (REKALQTTTN) are cytoplasmic. The helical transmembrane segment at 71–93 (YLIVSLAVADLLVATLVMPWVVY) threads the bilayer. Over 94–108 (LEVVGEWKFSRIHCD) the chain is Extracellular. The cysteines at positions 107 and 182 are disulfide-linked. A helical membrane pass occupies residues 109–130 (IFVTLDVMMCTASILNLCAISI). At 131–151 (DRYTAVAMPMLYNTRYSSKRR) the chain is on the cytoplasmic side. The helical transmembrane segment at 152-172 (VTVMIAIVWVLSFTISCPMLF) threads the bilayer. Residues 173–188 (GLNNTDQNECIIANPA) are Extracellular-facing. Residues 189–213 (FVVYSSIVSFYVPFIVTLLVYIKIY) traverse the membrane as a helical segment. Residues 211–374 (KIYIVLRRRR…SQQKEKKATQ (164 aa)) form an interaction with PPP1R9B region. Over 214 to 374 (IVLRRRRKRV…SQQKEKKATQ (161 aa)) the chain is Cytoplasmic. Residues 281 to 332 (MEMLSSTSPPERTRYSPIPPSHHQLTLPDPSHHGLHSTPDSPAKPEKNGHAK) are disordered. Residues 375-396 (MLAIVLGVFIICWLPFFITHIL) form a helical membrane-spanning segment. Over 397 to 410 (NIHCDCNIPPVLYS) the chain is Extracellular. Cysteine 400 and cysteine 402 are disulfide-bonded. A helical membrane pass occupies residues 411-432 (AFTWLGYVNSAVNPIIYTTFNI). Over 433–444 (EFRKAFLKILHC) the chain is Cytoplasmic. Residue cysteine 444 is the site of S-palmitoyl cysteine attachment.

This sequence belongs to the G-protein coupled receptor 1 family. In terms of assembly, forms homo- and heterooligomers with DRD4. The interaction with DRD4 may modulate agonist-induced downstream signaling. Interacts with CADPS and CADPS2. Interacts with GPRASP1, PPP1R9B and CLIC6. Interacts with ARRB2. Interacts with HTR2A. Interacts with DRD1. Interacts with KCNA2. Post-translationally, palmitoylated. Palmitoylation which is required for proper localization to the plasma membrane and stability of the receptor could be carried on by ZDHHC4, ZDHHC3 and ZDHHC8.

It is found in the cell membrane. The protein resides in the golgi apparatus membrane. Its function is as follows. Dopamine receptor whose activity is mediated by G proteins which inhibit adenylyl cyclase. Positively regulates postnatal regression of retinal hyaloid vessels via suppression of VEGFR2/KDR activity, downstream of OPN5. The chain is D(2) dopamine receptor (DRD2) from Bos taurus (Bovine).